Reading from the N-terminus, the 456-residue chain is Argininosuccinate lyase (456 aa).

The protein belongs to the lyase 1 family. Argininosuccinate lyase subfamily.

The protein resides in the cytoplasm. The catalysed reaction is 2-(N(omega)-L-arginino)succinate = fumarate + L-arginine. It participates in amino-acid biosynthesis; L-arginine biosynthesis; L-arginine from L-ornithine and carbamoyl phosphate: step 3/3. The sequence is that of Argininosuccinate lyase from Shewanella amazonensis (strain ATCC BAA-1098 / SB2B).